Here is a 371-residue protein sequence, read N- to C-terminus: Aspartate-semialdehyde dehydrogenase (371 aa).

NADP(+) is bound by residues 11-14 (RGMV), 38-39 (TS), and Gln-75. A phosphate-binding site is contributed by Arg-104. Residue Cys-137 is the Acyl-thioester intermediate of the active site. A substrate-binding site is contributed by Gln-164. 167–168 (SG) serves as a coordination point for NADP(+). Glu-243 lines the substrate pocket. Lys-246 is a binding site for phosphate. Residue Arg-269 coordinates substrate. Catalysis depends on His-276, which acts as the Proton acceptor. NADP(+) is bound at residue Gln-352.

This sequence belongs to the aspartate-semialdehyde dehydrogenase family. Homodimer.

The catalysed reaction is L-aspartate 4-semialdehyde + phosphate + NADP(+) = 4-phospho-L-aspartate + NADPH + H(+). Its pathway is amino-acid biosynthesis; L-lysine biosynthesis via DAP pathway; (S)-tetrahydrodipicolinate from L-aspartate: step 2/4. It functions in the pathway amino-acid biosynthesis; L-methionine biosynthesis via de novo pathway; L-homoserine from L-aspartate: step 2/3. The protein operates within amino-acid biosynthesis; L-threonine biosynthesis; L-threonine from L-aspartate: step 2/5. Functionally, catalyzes the NADPH-dependent formation of L-aspartate-semialdehyde (L-ASA) by the reductive dephosphorylation of L-aspartyl-4-phosphate. The protein is Aspartate-semialdehyde dehydrogenase of Buchnera aphidicola subsp. Acyrthosiphon pisum (strain APS) (Acyrthosiphon pisum symbiotic bacterium).